We begin with the raw amino-acid sequence, 481 residues long: Proline--tRNA ligase (481 aa).

It belongs to the class-II aminoacyl-tRNA synthetase family. ProS type 3 subfamily. Homodimer.

It is found in the cytoplasm. It catalyses the reaction tRNA(Pro) + L-proline + ATP = L-prolyl-tRNA(Pro) + AMP + diphosphate. Functionally, catalyzes the attachment of proline to tRNA(Pro) in a two-step reaction: proline is first activated by ATP to form Pro-AMP and then transferred to the acceptor end of tRNA(Pro). The polypeptide is Proline--tRNA ligase (Prosthecochloris aestuarii (strain DSM 271 / SK 413)).